We begin with the raw amino-acid sequence, 103 residues long: Pseudonajatoxin b homolog (103 aa).

Positions 1-21 are cleaved as a signal peptide; the sequence is MKTLLLTLVVVTIVCLDLGYT. Cystine bridges form between Cys-24-Cys-42, Cys-35-Cys-63, Cys-48-Cys-52, Cys-67-Cys-79, and Cys-80-Cys-85.

This sequence belongs to the three-finger toxin family. Long-chain subfamily. Type II alpha-neurotoxin sub-subfamily. As to expression, expressed by the venom gland.

It localises to the secreted. Functionally, binds with high affinity to muscular (alpha-1/CHRNA1) and neuronal (alpha-7/CHRNA7) nicotinic acetylcholine receptor (nAChR) and inhibits acetylcholine from binding to the receptor, thereby impairing neuromuscular and neuronal transmission. The chain is Pseudonajatoxin b homolog from Pseudonaja textilis (Eastern brown snake).